The following is a 436-amino-acid chain: Tol-Pal system protein TolB (436 aa).

Residues 1 to 28 (MMKCSFFRAILVAVGLMAAAVVATPANA) form the signal peptide.

Belongs to the TolB family. The Tol-Pal system is composed of five core proteins: the inner membrane proteins TolA, TolQ and TolR, the periplasmic protein TolB and the outer membrane protein Pal. They form a network linking the inner and outer membranes and the peptidoglycan layer.

Its subcellular location is the periplasm. Its function is as follows. Part of the Tol-Pal system, which plays a role in outer membrane invagination during cell division and is important for maintaining outer membrane integrity. The protein is Tol-Pal system protein TolB of Rhizobium etli (strain CIAT 652).